A 201-amino-acid chain; its full sequence is UPF0177 protein YajF (201 aa).

The next 5 membrane-spanning stretches (helical) occupy residues 10–30, 44–64, 82–102, 119–139, and 159–179; these read TVILALFLLFLSQVPLYYVEY, ITVNFILIGLLIILIAIMLGI, ILILILIIPSVALDILFSQFI, VMGSLLWFGKILGVALLAPIL, and FVFSSLLFTFMHSGYSWVFLI.

It belongs to the UPF0177 family.

It localises to the cell membrane. This Lactococcus lactis subsp. lactis (strain IL1403) (Streptococcus lactis) protein is UPF0177 protein YajF (yajF).